The primary structure comprises 235 residues: Ribonuclease 3 (235 aa).

The region spanning isoleucine 6–glycine 131 is the RNase III domain. Residue glutamate 44 coordinates Mg(2+). Aspartate 48 is an active-site residue. Positions 117 and 120 each coordinate Mg(2+). Glutamate 120 is an active-site residue. The DRBM domain maps to aspartate 156 to isoleucine 225.

This sequence belongs to the ribonuclease III family. Homodimer. Mg(2+) is required as a cofactor.

The protein resides in the cytoplasm. It carries out the reaction Endonucleolytic cleavage to 5'-phosphomonoester.. Digests double-stranded RNA. Involved in the processing of primary rRNA transcript to yield the immediate precursors to the large and small rRNAs (23S and 16S). Processes some mRNAs, and tRNAs when they are encoded in the rRNA operon. Processes pre-crRNA and tracrRNA of type II CRISPR loci if present in the organism. The polypeptide is Ribonuclease 3 (Bartonella quintana (strain Toulouse) (Rochalimaea quintana)).